Consider the following 68-residue polypeptide: Small ribosomal subunit protein bS21 (68 aa).

The interval 39–68 is disordered; that stretch reads PPSVKRVRKKQESERRHRKERAMRRRMMEE. A compositionally biased stretch (basic residues) spans 54-68; sequence RHRKERAMRRRMMEE.

This sequence belongs to the bacterial ribosomal protein bS21 family.

The protein is Small ribosomal subunit protein bS21 of Orientia tsutsugamushi (strain Ikeda) (Rickettsia tsutsugamushi).